A 238-amino-acid chain; its full sequence is MALVPCQVLRMAILLSYCSILCNYKAIEMPSHQTYGGSWKFLTFIDLVIQAVFFGICVLTDLSSLLTRGSGNQEQERQLKKLISLRDWMLAVLAFPVGVFVVAVFWIIYAYDREMIYPKLLDNFIPGWLNHGMHTTVLPFILIEMRTSHHQYPSRSSGLTAICTFSVGYILWVCWVHHVTGMWVYPFLEHIGPGARIIFFGSTTILMNFLYLLGEVLNNYIWDTQKSMEEEKEKPKLE.

The Cytoplasmic segment spans residues 1–12 (MALVPCQVLRMA). The chain crosses the membrane as a helical span at residues 13–30 (ILLSYCSILCNYKAIEMP). The Extracellular portion of the chain corresponds to 31-44 (SHQTYGGSWKFLTF). Residues 45 to 67 (IDLVIQAVFFGICVLTDLSSLLT) traverse the membrane as a helical segment. Residues 68-87 (RGSGNQEQERQLKKLISLRD) are Cytoplasmic-facing. A helical transmembrane segment spans residues 88-110 (WMLAVLAFPVGVFVVAVFWIIYA). Residues 111-124 (YDREMIYPKLLDNF) lie on the Extracellular side of the membrane. A helical transmembrane segment spans residues 125–144 (IPGWLNHGMHTTVLPFILIE). The Cytoplasmic segment spans residues 145-156 (MRTSHHQYPSRS). The chain crosses the membrane as a helical span at residues 157–179 (SGLTAICTFSVGYILWVCWVHHV). Over 180-193 (TGMWVYPFLEHIGP) the chain is Extracellular. The chain crosses the membrane as a helical span at residues 194 to 216 (GARIIFFGSTTILMNFLYLLGEV). The Cytoplasmic segment spans residues 217–238 (LNNYIWDTQKSMEEEKEKPKLE).

It belongs to the AIG1 family. In terms of tissue distribution, highly expressed in heart, ovary, testis, liver, and kidney, at lower levels in spleen, prostate, brain, skeletal muscle, pancreas, small intestine and colon, and undetected in peripheral blood leukocytes, thymus, lung and placenta. AIG1 expression is higher in hair follicles from males than from females.

The protein localises to the cell membrane. It carries out the reaction 9-hexadecanoyloxy-octadecanoate + H2O = 9-hydroxy-octadecanoate + hexadecanoate + H(+). The enzyme catalyses 12-hexadecanoyloxy-octadecanoate + H2O = 12-hydroxyoctadecanoate + hexadecanoate + H(+). The catalysed reaction is 9-(9Z-hexadecenoyloxy)-octadecanoate + H2O = (9Z)-hexadecenoate + 9-hydroxy-octadecanoate + H(+). It catalyses the reaction 12-(9Z-hexadecenoyloxy)-octadecanoate + H2O = 12-hydroxyoctadecanoate + (9Z)-hexadecenoate + H(+). It carries out the reaction 13-(9Z-hexadecenoyloxy)-octadecanoate + H2O = 13-hydroxy-octadecanoate + (9Z)-hexadecenoate + H(+). The enzyme catalyses 9-octadecanoyloxy-octadecanoate + H2O = 9-hydroxy-octadecanoate + octadecanoate + H(+). The catalysed reaction is 12-octadecanoyloxy-octadecanoate + H2O = 12-hydroxyoctadecanoate + octadecanoate + H(+). It catalyses the reaction 13-octadecanoyloxy-octadecanoate + H2O = 13-hydroxy-octadecanoate + octadecanoate + H(+). It carries out the reaction 9-(9Z-octadecenoyloxy)-octadecanoate + H2O = 9-hydroxy-octadecanoate + (9Z)-octadecenoate + H(+). The enzyme catalyses 12-(9Z-octadecenoyloxy)-octadecanoate + H2O = 12-hydroxyoctadecanoate + (9Z)-octadecenoate + H(+). The catalysed reaction is 13-(9Z-octadecenoyloxy)-octadecanoate + H2O = 13-hydroxy-octadecanoate + (9Z)-octadecenoate + H(+). It catalyses the reaction 5-(9Z-hexadecenoyloxy)-octadecanoate + H2O = 5-hydroxy-octadecanoate + (9Z)-hexadecenoate + H(+). With respect to regulation, inhibited by N-hydroxyhydantoin carbamate JJH260 and beta-lactone KC01. Hydrolyzes bioactive fatty-acid esters of hydroxy-fatty acids (FAHFAs), but not other major classes of lipids. Show a preference for FAHFAs with branching distal from the carboxylate head group of the lipids. The polypeptide is Androgen-induced gene 1 protein (AIG1) (Homo sapiens (Human)).